A 310-amino-acid polypeptide reads, in one-letter code: Methionyl-tRNA formyltransferase (310 aa).

110-113 provides a ligand contact to (6S)-5,6,7,8-tetrahydrofolate; that stretch reads SLLP.

The protein belongs to the Fmt family.

It carries out the reaction L-methionyl-tRNA(fMet) + (6R)-10-formyltetrahydrofolate = N-formyl-L-methionyl-tRNA(fMet) + (6S)-5,6,7,8-tetrahydrofolate + H(+). In terms of biological role, attaches a formyl group to the free amino group of methionyl-tRNA(fMet). The formyl group appears to play a dual role in the initiator identity of N-formylmethionyl-tRNA by promoting its recognition by IF2 and preventing the misappropriation of this tRNA by the elongation apparatus. The sequence is that of Methionyl-tRNA formyltransferase from Clostridium tetani (strain Massachusetts / E88).